A 651-amino-acid chain; its full sequence is Acetyl-coenzyme A synthetase (651 aa).

Residues 189–192 (RGGK), Thr-311, and Asn-335 each bind CoA. Residues 387-389 (GEP), 411-416 (DTWWQT), Asp-500, and Arg-515 contribute to the ATP site. Ser-523 provides a ligand contact to CoA. Residue Arg-526 participates in ATP binding. Mg(2+)-binding residues include Val-537, His-539, and Val-542. Arg-584 is a binding site for CoA. Lys-609 carries the N6-acetyllysine modification.

It belongs to the ATP-dependent AMP-binding enzyme family. Requires Mg(2+) as cofactor. Acetylated. Deacetylation by the SIR2-homolog deacetylase activates the enzyme.

The enzyme catalyses acetate + ATP + CoA = acetyl-CoA + AMP + diphosphate. Functionally, catalyzes the conversion of acetate into acetyl-CoA (AcCoA), an essential intermediate at the junction of anabolic and catabolic pathways. AcsA undergoes a two-step reaction. In the first half reaction, AcsA combines acetate with ATP to form acetyl-adenylate (AcAMP) intermediate. In the second half reaction, it can then transfer the acetyl group from AcAMP to the sulfhydryl group of CoA, forming the product AcCoA. This chain is Acetyl-coenzyme A synthetase, found in Allorhizobium ampelinum (strain ATCC BAA-846 / DSM 112012 / S4) (Agrobacterium vitis (strain S4)).